The sequence spans 325 residues: 2-dehydro-3-deoxygluconokinase (325 aa).

Substrate contacts are provided by residues 49 to 53, tyrosine 105, 121 to 123, and arginine 181; these read GSEAN and YYR. ATP is bound by residues 179-181, 240-245, and 269-272; these read NIR, KLGAEG, and GAGD. 2 residues coordinate substrate: aspartate 272 and aspartate 308. Catalysis depends on aspartate 272, which acts as the Proton acceptor.

Belongs to the carbohydrate kinase PfkB family. Homohexamer; trimer of dimers.

It carries out the reaction 2-dehydro-3-deoxy-D-gluconate + ATP = 2-dehydro-3-deoxy-6-phospho-D-gluconate + ADP + H(+). It participates in carbohydrate acid metabolism; 2-dehydro-3-deoxy-D-gluconate degradation; D-glyceraldehyde 3-phosphate and pyruvate from 2-dehydro-3-deoxy-D-gluconate: step 1/2. Involved in the degradation of glucose via the semi-phosphorylative Entner-Doudoroff pathway. Catalyzes the phosphorylation of 2-keto-3-deoxygluconate (KDG) yielding 2-keto-3-deoxy-6-phosphogluconate (KDPG). This chain is 2-dehydro-3-deoxygluconokinase (kdgK), found in Thermoproteus tenax.